The sequence spans 425 residues: Cysteate synthase (425 aa).

Position 106 is an N6-(pyridoxal phosphate)lysine (Lys-106). Pyridoxal 5'-phosphate contacts are provided by Asn-132 and Thr-382.

It belongs to the threonine synthase family. Cysteate synthase subfamily. Homotrimer. It depends on pyridoxal 5'-phosphate as a cofactor.

It catalyses the reaction O-phospho-L-serine + sulfite + H(+) = L-cysteate + phosphate. Its pathway is cofactor biosynthesis; coenzyme M biosynthesis. In terms of biological role, specifically catalyzes the beta-elimination of phosphate from L-phosphoserine and the beta-addition of sulfite to the dehydroalanine intermediate to produce L-cysteate. The chain is Cysteate synthase from Methanosphaerula palustris (strain ATCC BAA-1556 / DSM 19958 / E1-9c).